Reading from the N-terminus, the 157-residue chain is Phosphopantetheine adenylyltransferase (157 aa).

Serine 8 contacts substrate. Residues 8 to 9 and histidine 16 each bind ATP; that span reads SF. Substrate-binding residues include lysine 40, threonine 72, and arginine 86. ATP is bound by residues 87–89, glutamate 97, and 122–128; these read GLR and HSFLSSS.

Belongs to the bacterial CoaD family. As to quaternary structure, homohexamer. Mg(2+) is required as a cofactor.

Its subcellular location is the cytoplasm. The enzyme catalyses (R)-4'-phosphopantetheine + ATP + H(+) = 3'-dephospho-CoA + diphosphate. It participates in cofactor biosynthesis; coenzyme A biosynthesis; CoA from (R)-pantothenate: step 4/5. Its function is as follows. Reversibly transfers an adenylyl group from ATP to 4'-phosphopantetheine, yielding dephospho-CoA (dPCoA) and pyrophosphate. The polypeptide is Phosphopantetheine adenylyltransferase (Prochlorococcus marinus (strain MIT 9313)).